We begin with the raw amino-acid sequence, 159 residues long: Neuroglobin-1 (159 aa).

The Globin domain maps to 3–151 (KLTEKEKELI…VVAAMSRGWA (149 aa)). Heme b is bound by residues histidine 66 and histidine 98.

Belongs to the globin family. Monomer. Homodimers and homotetramers. Mainly monomeric but also detected as part of homodimers and homotetramers.

The protein localises to the cytoplasm. It is found in the cytosol. Its subcellular location is the mitochondrion matrix. It carries out the reaction Fe(III)-heme b-[protein] + nitric oxide + H2O = Fe(II)-heme b-[protein] + nitrite + 2 H(+). Monomeric globin with a bis-histidyl six-coordinate heme-iron atom through which it can bind dioxygen, carbon monoxide and nitric oxide. Could help transport oxygen and increase its availability to the metabolically active neuronal tissues, though its low quantity in tissues as well as its high affinity for dioxygen, which may limit its oxygen-releasing ability, argue against it. The ferrous/deoxygenated form exhibits a nitrite reductase activity and it could produce nitric oxide which in turn inhibits cellular respiration in response to hypoxia. In its ferrous/deoxygenated state, it may also exhibit GDI (Guanine nucleotide Dissociation Inhibitor) activity toward heterotrimeric G-alpha proteins, thereby regulating signal transduction to facilitate neuroprotective responses in the wake of hypoxia and associated oxidative stress. This Oncorhynchus mykiss (Rainbow trout) protein is Neuroglobin-1 (ngb1).